Consider the following 250-residue polypeptide: MTVKKLYFVPAGRCMLDHSSVNSTLTPGELLDLPVWCYLLETEEGPILVDTGMPESAVNNEGLFNGTFVEGQVLPKMTEEDRIVNILKRVGYEPEDLLYIISSHLHFDHAGGNGAFINTPIIVQRAEYEAAQHSEEYLKECILPNLNYKIIEGDYEVVPGVQLLHTPGHTPGHQSLLIETEKSGPVLLTIDASYTKENFENEVPFAGFDSELALSSIKRLKEVVMKEKPIVFFGHDIEQERGCKVFPEYI.

Residues His-104, His-106, Asp-108, His-109, His-169, Asp-191, and His-235 each coordinate Zn(2+).

The protein belongs to the metallo-beta-lactamase superfamily. In terms of assembly, monomer. The cofactor is Zn(2+).

It carries out the reaction an N-acyl-L-homoserine lactone + H2O = an N-acyl-L-homoserine + H(+). Completely inhibited by Cu(2+) and Ag(+). Partially inhibited by Cr(2+), Pb(2+) and Fe(2+). Mg(2+), Ca(2+), Mn(2+), Co(2+), Ni(2+), Zn(2+) and Cd(2+) have no effect on activity. The chelating agents EDTA, 2,2'bipyridine and o-phenanthroline have no effect on enzyme activity. Its function is as follows. Hydrolyzes acyl homoserine lactones with varying lengths of acyl chains, with a slight preference for substrates without 3-oxo substitution at the C3 position. Has only residual activity towards non-acyl lactones, and no activity towards non-cyclic esters. This chain is N-acyl homoserine lactonase, found in Bacillus sp.